The sequence spans 154 residues: Mitochondrial fission 1 protein (154 aa).

Residues 1–124 (MEDLLNEVVP…KEIDKEVAKG (124 aa)) are Cytoplasmic-facing. The chain crosses the membrane as a helical span at residues 125–145 (MVVAGGAALVLGGILGLGIAM). Topologically, residues 146-154 (ARNKQKREK) are mitochondrial intermembrane.

It belongs to the FIS1 family.

The protein localises to the mitochondrion outer membrane. In terms of biological role, involved in the fragmentation of the mitochondrial network and its perinuclear clustering. Functions downstream of Pink1 and upstream of Drp1 to regulate mitochondrial fission. The protein is Mitochondrial fission 1 protein of Drosophila melanogaster (Fruit fly).